The sequence spans 698 residues: Polyphosphate kinase 1 (698 aa).

N46 is a binding site for ATP. Residues R377 and R407 each contribute to the Mg(2+) site. H437 serves as the catalytic Phosphohistidine intermediate. Residues Y470, R566, and H594 each coordinate ATP.

The protein belongs to the polyphosphate kinase 1 (PPK1) family. Mg(2+) serves as cofactor. An intermediate of this reaction is the autophosphorylated ppk in which a phosphate is covalently linked to a histidine residue through a N-P bond.

The catalysed reaction is [phosphate](n) + ATP = [phosphate](n+1) + ADP. Functionally, catalyzes the reversible transfer of the terminal phosphate of ATP to form a long-chain polyphosphate (polyP). The polypeptide is Polyphosphate kinase 1 (Chlorobaculum tepidum (strain ATCC 49652 / DSM 12025 / NBRC 103806 / TLS) (Chlorobium tepidum)).